A 181-amino-acid polypeptide reads, in one-letter code: uncharacterized protein (181 aa).

This is an uncharacterized protein from Borreliella burgdorferi (strain ATCC 35210 / DSM 4680 / CIP 102532 / B31) (Borrelia burgdorferi).